The sequence spans 70 residues: MQGVQEQIEELQMKMAFQELTVEELNQEVIKLNQLIAHQQHQIQLLIGKLKAMEPSNIATQAEETPPPHY.

This sequence belongs to the SlyX family.

The chain is Protein SlyX homolog from Shewanella sp. (strain MR-7).